We begin with the raw amino-acid sequence, 1113 residues long: Antigenic protein P1 (1113 aa).

A helical membrane pass occupies residues 7–27 (IIAVVAIASAIVTGVVVIVVV). N-linked (GlcNAc...) asparagine glycosylation is found at asparagine 121, asparagine 207, asparagine 225, asparagine 233, asparagine 274, asparagine 533, asparagine 576, asparagine 622, asparagine 675, asparagine 679, asparagine 730, asparagine 753, asparagine 880, asparagine 899, asparagine 907, asparagine 972, and asparagine 995. One can recognise a Peptidase M60 domain in the interval 159–473 (VFGQRAVAWA…SYVNMAHAFG (315 aa)). The PA14 domain occupies 648–800 (LDPHQVEYEV…TEESSVDVSK (153 aa)).

It is found in the membrane. This is Antigenic protein P1 from Entamoeba histolytica (strain ATCC 30459 / HM-1:IMSS / ABRM).